A 330-amino-acid polypeptide reads, in one-letter code: Intraflagellar transport protein 46 homolog (330 aa).

2 disordered regions span residues 1–21 (MDRP…ATPR) and 55–112 (SIKT…EGVY). Residues 7-16 (ETVDIPDSED) are compositionally biased toward acidic residues. Basic and acidic residues predominate over residues 68–79 (SSSEKLCDRGSS). Over residues 80-101 (DDDDDDDNDDDEDEDDDDDDEN) the composition is skewed to acidic residues.

The protein belongs to the IFT46 family.

It is found in the cytoplasm. The protein localises to the cytoskeleton. It localises to the cilium basal body. Its subcellular location is the cell projection. The protein resides in the cilium. Its function is as follows. Forms part of a complex involved in intraflagellar transport (IFT), the bi-directional movement of particles required for the assembly, maintenance and functioning of primary cilia. The chain is Intraflagellar transport protein 46 homolog from Schistosoma japonicum (Blood fluke).